The sequence spans 526 residues: Cytochrome P450 4e2 (526 aa).

Heme is bound by residues Glu307 and Cys444.

The protein belongs to the cytochrome P450 family. Heme serves as cofactor.

Its subcellular location is the endoplasmic reticulum membrane. The protein localises to the microsome membrane. In terms of biological role, may be involved in the metabolism of insect hormones and in the breakdown of synthetic insecticides. In Drosophila melanogaster (Fruit fly), this protein is Cytochrome P450 4e2 (Cyp4e2).